Reading from the N-terminus, the 429-residue chain is Glutamate-1-semialdehyde 2,1-aminomutase (429 aa).

N6-(pyridoxal phosphate)lysine is present on Lys-265.

This sequence belongs to the class-III pyridoxal-phosphate-dependent aminotransferase family. HemL subfamily. In terms of assembly, homodimer. It depends on pyridoxal 5'-phosphate as a cofactor.

Its subcellular location is the cytoplasm. It carries out the reaction (S)-4-amino-5-oxopentanoate = 5-aminolevulinate. It participates in porphyrin-containing compound metabolism; protoporphyrin-IX biosynthesis; 5-aminolevulinate from L-glutamyl-tRNA(Glu): step 2/2. The protein is Glutamate-1-semialdehyde 2,1-aminomutase of Shewanella halifaxensis (strain HAW-EB4).